Consider the following 382-residue polypeptide: Beta-lactamase CMY-10 (382 aa).

Residues 1–23 form the signal peptide; the sequence is MQQRQSILWGAVATLMWAGLAHA. Ser-88 serves as the catalytic Acyl-ester intermediate. Position 88 (Ser-88) interacts with AMP. Positions 88, 144, 174, 336, 338, and 363 each coordinate GMP. IMP-binding residues include Ser-88, Gln-144, Tyr-174, Thr-336, Ser-338, and Asn-363. AMP is bound at residue Tyr-174. Ser-338 serves as a coordination point for AMP.

This sequence belongs to the class-C beta-lactamase family. As to quaternary structure, monomer.

The catalysed reaction is a beta-lactam + H2O = a substituted beta-amino acid. Its activity is regulated as follows. Inhibited by various nucleotides in vitro, including adenosine 5'-(P-acetyl)monophosphate (acAMP), inosine-5'-monophosphate (IMP) and guanosine-5'-monophosphate (GMP); IMP and GMP exhibit strongest competitive inhibition. Inhibited by the beta-lactamase-blocking agent, avibactam. Inhibited by clavulanic acid. Weakly inhibited by citric acid. Functionally, class C beta-lactamase which confers resistance to penicillins and cephalosporins. Has benzylpenicillin-, ceftazidime-, nitrocefin- and imipenem-hydrolyzing activity. In Klebsiella aerogenes (Enterobacter aerogenes), this protein is Beta-lactamase CMY-10.